The chain runs to 269 residues: MTGLLDGKRILVSGIITDSSIAFHIARVAQEQGAQLVLTGFDRLRLIQRITDRLPAKAPLLELDVQNEEHLASLAGRVTEAIGAGNKLDGVVHSIGFMPQTGMGINPFFDAPYADVSKGIHISAYSYASMAKALLPIMNPGGSIVGMDFDPSRAMPAYNWMTVAKSALESVNRFVAREAGKYGVRSNLVAAGPIRTLAMSAIVGGALGEEAGAQIQLLEEGWDQRAPIGWNMKDATPVAKTVCALLSDWLPATTGDIIYADGGAHTQLL.

Residues 20-21 (SI), 64-65 (DV), and 95-96 (IG) each bind NAD(+). Tyrosine 158 contributes to the substrate binding site. 2 residues coordinate NAD(+): lysine 165 and isoleucine 194.

This sequence belongs to the short-chain dehydrogenases/reductases (SDR) family. FabI subfamily. Homodimer. Homotetramer.

The enzyme catalyses a 2,3-saturated acyl-[ACP] + NAD(+) = a (2E)-enoyl-[ACP] + NADH + H(+). The catalysed reaction is a 2,3-saturated acyl-CoA + NAD(+) = a (2E)-enoyl-CoA + NADH + H(+). Its pathway is lipid metabolism; mycolic acid biosynthesis. Enoyl-ACP reductase of the type II fatty acid syntase (FAS-II) system, which is involved in the biosynthesis of mycolic acids, a major component of mycobacterial cell walls. Catalyzes the NADH-dependent reduction of the double bond of 2-trans-enoyl-[acyl-carrier protein], an essential step in the fatty acid elongation cycle of the FAS-II pathway. Shows preference for long-chain fatty acyl thioester substrates, and can also use 2-trans-enoyl-CoAs as alternative substrates. The mycobacterial FAS-II system utilizes the products of the FAS-I system as primers to extend fatty acyl chain lengths up to C56, forming the meromycolate chain that serves as the precursor for final mycolic acids. Its function is as follows. Is the primary target of the first-line antitubercular drug isoniazid (INH) and of the second-line drug ethionamide (ETH). Overexpressed inhA confers INH and ETH resistance to M.bovis. The mechanism of isoniazid action against InhA is covalent attachment of the activated form of the drug to the nicotinamide ring of NAD and binding of the INH-NAD adduct to the active site of InhA. Similarly, the ETH-NAD adduct binds InhA. This is Enoyl-[acyl-carrier-protein] reductase [NADH] from Mycobacterium bovis (strain ATCC BAA-935 / AF2122/97).